The primary structure comprises 117 residues: UPF0102 protein Clos_1471 (117 aa).

Belongs to the UPF0102 family.

The sequence is that of UPF0102 protein Clos_1471 from Alkaliphilus oremlandii (strain OhILAs) (Clostridium oremlandii (strain OhILAs)).